The primary structure comprises 539 residues: MAKQIKFSDDARKSMVEGINKLSDTVKVTLGPKGRNVVLDKEYGAPLITNDGVSIAREIELEDEYENMGAQLVKEVATKTNDVAGDGTTTATLLAQAIIREGLKNLAAGANPIVLQKGIKKAVEKSVEAIKARSHSVTTKEEIANVGSVSAADETIGKLIAEAMEKVGNNGVITVEESKSMGTTLNVVEGMEFDRGYVSPYMVSDSDKMVAAMEDPFILVTDRKITNIQDILPLLEQVVQQGKPLFIIAEDVEGEALATLVLNKIRGTFNCVAVKAPGFGDRRKEMLEDICILTGAQLITEDLGIELKDASFDMLGRARKVNVSKDKTTIVDGNGDQSKIEERINQIQNRIPETDSEYDREKLQERLAKLSGGVAVIEVGAATETELKERKLRIEDALAATRAAVEEGIVAGGGTILLDIIEEVEKLVDDVEGDEKTGVKIILKALEEPVKQIAINAGIDGSVIVENVKNKDKGIGFDAYKGEYVDMLKAGIVDPTKVTLSALQNAASVASLLLTTEAAVVTIKKDEPAMPQPGPGAYM.

ATP-binding positions include 29–32 (TLGP), 86–90 (DGTTT), G413, and D494.

The protein belongs to the chaperonin (HSP60) family. As to quaternary structure, forms a cylinder of 14 subunits composed of two heptameric rings stacked back-to-back. Interacts with the co-chaperonin GroES.

It is found in the cytoplasm. It catalyses the reaction ATP + H2O + a folded polypeptide = ADP + phosphate + an unfolded polypeptide.. Functionally, together with its co-chaperonin GroES, plays an essential role in assisting protein folding. The GroEL-GroES system forms a nano-cage that allows encapsulation of the non-native substrate proteins and provides a physical environment optimized to promote and accelerate protein folding. This Finegoldia magna (strain ATCC 29328 / DSM 20472 / WAL 2508) (Peptostreptococcus magnus) protein is Chaperonin GroEL.